Reading from the N-terminus, the 460-residue chain is Putative arginine/ornithine antiporter (460 aa).

The Cytoplasmic segment spans residues 1-4 (MEKK). Residues 5–25 (LGLSALTALVLSSMLGAGVFS) form a helical membrane-spanning segment. Residues 26-38 (LPQNMAAVASPAA) are Periplasmic-facing. A helical membrane pass occupies residues 39-59 (LLIGWGITGAGILLLAFAMLI). The Cytoplasmic segment spans residues 60–92 (LTRIRPELDGGIFTYAREGFGELIGFCSAWGYW). Residues 93 to 113 (LCAVIANVSYLVIVFSALSFF) form a helical membrane-spanning segment. Residues 114-125 (TDTPELRLFGDG) are Periplasmic-facing. Residues 126–146 (NTWQSIVGASALLWIVHFLIL) traverse the membrane as a helical segment. Over 147–157 (RGVQTAASINL) the chain is Cytoplasmic. A helical transmembrane segment spans residues 158 to 178 (VATLAKLLPLGLFVVLAMMMF). Over 179–201 (KLDTFKLDFTGLALGVPVWEQVK) the chain is Periplasmic. A helical transmembrane segment spans residues 202–222 (NTMLITLWVFIGVEGAVVVSA). The Cytoplasmic portion of the chain corresponds to 223 to 235 (RARNKRDVGKATL). A helical membrane pass occupies residues 236-256 (LAVLSALGVYLLVTLLSLGVV). Residues 257–282 (ARPELAEIRNPSMAGLMVEMMGPWGE) are Periplasmic-facing. Residues 283–303 (IIIAAGLIVSVCGAYLSWTIM) traverse the membrane as a helical segment. The Cytoplasmic segment spans residues 304 to 331 (AAEVPFLAATHKAFPRIFARQNAQAAPS). Residues 332–352 (ASLWLTNICVQICLVLIWLTG) traverse the membrane as a helical segment. Topologically, residues 353 to 357 (SDYNT) are periplasmic. Residues 358–378 (LLTIASEMILVPYFLVGAFLL) traverse the membrane as a helical segment. The Cytoplasmic segment spans residues 379 to 384 (KIATRP). 2 consecutive transmembrane segments (helical) span residues 385–405 (LHKA…YASG) and 406–426 (PMHL…FLYA). Over 427–439 (RKTHTHDNVLNRQ) the chain is Cytoplasmic. Residues 440–460 (EMVLIGMLLIASVPATWMLVG) form a helical membrane-spanning segment.

This sequence belongs to the amino acid-polyamine-organocation (APC) superfamily. Basic amino acid/polyamine antiporter (APA) (TC 2.A.3.2) family.

The protein resides in the cell inner membrane. The catalysed reaction is L-ornithine(in) + L-arginine(out) = L-ornithine(out) + L-arginine(in). Functionally, catalyzes electroneutral exchange between arginine and ornithine to allow high-efficiency energy conversion in the arginine deiminase pathway. This Escherichia coli O6:H1 (strain CFT073 / ATCC 700928 / UPEC) protein is Putative arginine/ornithine antiporter (ydgI).